The primary structure comprises 257 residues: MNINDIFLKRKKRWGIINRLRDSEEQADGSLTPSRRIALISDDKSFRELYAQVKTGNPNSFPGYEQKVEANRLKTGQQDAVVTGTCRIGGVKTAVAVMDKRFLMGSMGIAVGEKITRLTEYAMKRKLPLIIFAASGGARMQEGLFSLMQMAKTTAAIEKFKDAGGLFISYLTNPTTGGVSASFASLGDIIIAEPGALICFAGPRVIEQTIGQKLPEGFQHSEFLLEHGMIDMIVDRKDMKQTLSKILKMHVNTGGEA.

One can recognise a CoA carboxyltransferase N-terminal domain in the interval methionine 1–alanine 257.

It belongs to the AccD/PCCB family. As to quaternary structure, acetyl-CoA carboxylase is a heterohexamer composed of biotin carboxyl carrier protein (AccB), biotin carboxylase (AccC) and two subunits each of ACCase subunit alpha (AccA) and ACCase subunit beta (AccD).

Its subcellular location is the cytoplasm. The enzyme catalyses N(6)-carboxybiotinyl-L-lysyl-[protein] + acetyl-CoA = N(6)-biotinyl-L-lysyl-[protein] + malonyl-CoA. Its pathway is lipid metabolism; malonyl-CoA biosynthesis; malonyl-CoA from acetyl-CoA: step 1/1. Component of the acetyl coenzyme A carboxylase (ACC) complex. Biotin carboxylase (BC) catalyzes the carboxylation of biotin on its carrier protein (BCCP) and then the CO(2) group is transferred by the transcarboxylase to acetyl-CoA to form malonyl-CoA. The sequence is that of Acetyl-coenzyme A carboxylase carboxyl transferase subunit beta 1 from Lachnospira eligens (strain ATCC 27750 / DSM 3376 / VPI C15-48 / C15-B4) (Eubacterium eligens).